The primary structure comprises 151 residues: Large ribosomal subunit protein bL9 (151 aa).

Belongs to the bacterial ribosomal protein bL9 family.

Binds to the 23S rRNA. This is Large ribosomal subunit protein bL9 from Bordetella bronchiseptica (strain ATCC BAA-588 / NCTC 13252 / RB50) (Alcaligenes bronchisepticus).